Reading from the N-terminus, the 368-residue chain is Zinc finger protein 24 (368 aa).

K22 participates in a covalent cross-link: Glycyl lysine isopeptide (Lys-Gly) (interchain with G-Cter in SUMO2). K27 is covalently cross-linked (Glycyl lysine isopeptide (Lys-Gly) (interchain with G-Cter in SUMO1); alternate). Residue K27 forms a Glycyl lysine isopeptide (Lys-Gly) (interchain with G-Cter in SUMO2); alternate linkage. An SCAN box domain is found at R52 to L134. A phosphoserine mark is found at S132 and S142. Residues K147, K177, and K236 each participate in a glycyl lysine isopeptide (Lys-Gly) (interchain with G-Cter in SUMO2) cross-link. The C2H2-type 1 zinc finger occupies H251–H273. A necessary and sufficient for nuclear localization region spans residues H251–H301. The residue at position 274 (S274) is a Phosphoserine. Glycyl lysine isopeptide (Lys-Gly) (interchain with G-Cter in SUMO2) cross-links involve residues K277 and K286. 3 consecutive C2H2-type zinc fingers follow at residues Y279–H301, Y307–H329, and Y335–H357. S292 carries the phosphoserine modification. Y335 bears the Phosphotyrosine mark. Glycyl lysine isopeptide (Lys-Gly) (interchain with G-Cter in SUMO2) cross-links involve residues K361 and K367.

The protein belongs to the krueppel C2H2-type zinc-finger protein family. In terms of processing, sumoylated. As to expression, expressed in many tissues except in heart.

It is found in the nucleus. In terms of biological role, transcription factor required for myelination of differentiated oligodendrocytes. Required for the conversion of oligodendrocytes from the premyelinating to the myelinating state. In the developing central nervous system (CNS), involved in the maintenance in the progenitor stage by promoting the cell cycle. Specifically binds to the 5'-TCAT-3' DNA sequence. Has transcription repressor activity in vitro. The protein is Zinc finger protein 24 (ZNF24) of Homo sapiens (Human).